The following is a 224-amino-acid chain: MENLKIIWHGHACFSLIGKKHVLVDPFLTDNPVAKVKPEELKPDLILVTHGHSDHCEDASKISKNTHAPVVAAFELSEILKEEGTETIDINPGGTIEYEGIRVKATIATHSSSYNGRYAGNPMGFVIDMGRKIYHAGDTGYFKDMEAIGAMDRPDIALLPIGGHYTMDVDGAFEAVKAIKPAIAIPMHYNTFDLIRADPERFKALAGTVGTYVIIPEIEKPIEI.

Belongs to the UPF0173 family.

In Thermoplasma acidophilum (strain ATCC 25905 / DSM 1728 / JCM 9062 / NBRC 15155 / AMRC-C165), this protein is UPF0173 metal-dependent hydrolase Ta0764.